Here is a 469-residue protein sequence, read N- to C-terminus: Adenosylhomocysteinase (469 aa).

Substrate is bound by residues Thr63, Asp139, and Glu164. Thr165 to Thr167 contacts NAD(+). Substrate contacts are provided by Lys194 and Asp198. Residues Asn199, Gly228 to Gly233, Glu251, Asn300, Ile321 to His323, and Asn375 contribute to the NAD(+) site.

The protein belongs to the adenosylhomocysteinase family. The cofactor is NAD(+).

The protein resides in the cytoplasm. It catalyses the reaction S-adenosyl-L-homocysteine + H2O = L-homocysteine + adenosine. The protein operates within amino-acid biosynthesis; L-homocysteine biosynthesis; L-homocysteine from S-adenosyl-L-homocysteine: step 1/1. Functionally, may play a key role in the regulation of the intracellular concentration of adenosylhomocysteine. This chain is Adenosylhomocysteinase, found in Pseudomonas putida (strain W619).